Reading from the N-terminus, the 219-residue chain is Peroxiredoxin (219 aa).

One can recognise a Thioredoxin domain in the interval Pro-2–Lys-164. Cys-44 serves as the catalytic Cysteine sulfenic acid (-SOH) intermediate. Residue Arg-127 coordinates substrate. Cys-206 and Cys-212 are joined by a disulfide.

Belongs to the peroxiredoxin family. Prx6 subfamily. Homodecamer. Pentamer of dimers that assemble into a ring structure.

The protein localises to the cytoplasm. It carries out the reaction a hydroperoxide + [thioredoxin]-dithiol = an alcohol + [thioredoxin]-disulfide + H2O. Its function is as follows. Thiol-specific peroxidase that catalyzes the reduction of hydrogen peroxide and organic hydroperoxides to water and alcohols, respectively. Plays a role in cell protection against oxidative stress by detoxifying peroxides. This chain is Peroxiredoxin, found in Methanosarcina mazei (strain ATCC BAA-159 / DSM 3647 / Goe1 / Go1 / JCM 11833 / OCM 88) (Methanosarcina frisia).